A 95-amino-acid polypeptide reads, in one-letter code: Complement inhibitor RaCI5 (95 aa).

The signal sequence occupies residues 1–21 (MNAVIVLCVTISAVLIHQCYS). 3 cysteine pairs are disulfide-bonded: C35-C59, C40-C61, and C55-C76.

It belongs to the RaCI family. Expressed in salivary glands.

Its subcellular location is the secreted. Its function is as follows. Complement inhibitor. Prevents complement-mediated C5 activation by binding to C5. Binds C5 at a different binding site than the other tick complement inhibitors OmCI and CirpT1, and the drug eculizumab. This Rhipicephalus appendiculatus (Brown ear tick) protein is Complement inhibitor RaCI5.